A 416-amino-acid polypeptide reads, in one-letter code: Enterobactin exporter EntS (416 aa).

Residues 1 to 21 lie on the Cytoplasmic side of the membrane; sequence MNKQSWLLNLSLLKTHPAFRA. A helical membrane pass occupies residues 22-42; the sequence is VFLARFISIVSLGLLGVAVPV. Residues 43–55 lie on the Periplasmic side of the membrane; the sequence is QIQIMTHSTWQVG. Residues 56–76 form a helical membrane-spanning segment; it reads LSVTLTGGAMFVGLMVGGVLA. Over 77-83 the chain is Cytoplasmic; it reads DRYERKK. Residues 84-104 traverse the membrane as a helical segment; it reads VILLARGTCGIGFIGLCLNAL. At 105–109 the chain is on the periplasmic side; it reads LPEPS. A helical membrane pass occupies residues 110 to 130; the sequence is LLAIYLLGLWDGFFASLGVTA. Residues 131-156 are Cytoplasmic-facing; that stretch reads LLAATPALVGRENLMQAGAITMLTVR. The helical transmembrane segment at 157-177 threads the bilayer; that stretch reads LGSVISPMIGGLLLATGGVAW. Position 178 (N178) is a topological domain, periplasmic. A helical membrane pass occupies residues 179–199; sequence YGLAAAGTFITLLPLLSLPAL. Over 200–218 the chain is Cytoplasmic; it reads PPPPQPREHPLKSLLAGFR. The helical transmembrane segment at 219–239 threads the bilayer; sequence FLLASPLVGGIALLGGLLTMA. The Periplasmic segment spans residues 240-256; sequence SAVRVLYPALADNWQMS. A helical transmembrane segment spans residues 257 to 277; that stretch reads AAQIGFLYAAIPLGAAIGALT. At 278–287 the chain is on the cytoplasmic side; that stretch reads SGKLAHSVRP. A helical transmembrane segment spans residues 288–307; it reads GLLMLLSTLGAFLAIGLFGL. Over 308-313 the chain is Periplasmic; that stretch reads MPMWIL. The helical transmembrane segment at 314 to 336 threads the bilayer; the sequence is GVVCLALFGWLSAVSSLLQYTML. Residues 337 to 356 are Cytoplasmic-facing; it reads QTQTPEAMLGRINGLWTAQN. The helical transmembrane segment at 357–377 threads the bilayer; the sequence is VTGDAIGAALLGGLGAMMTPV. Residue A378 is a topological domain, periplasmic. A helical transmembrane segment spans residues 379–399; that stretch reads SASASGFGLLIIGVLLLLVLV. At 400-416 the chain is on the cytoplasmic side; that stretch reads ELRRFRQTPPQVTASDS.

The protein belongs to the major facilitator superfamily. EntS (TC 2.A.1.38) family.

Its subcellular location is the cell inner membrane. Component of an export pathway for enterobactin. The sequence is that of Enterobactin exporter EntS from Escherichia coli O127:H6 (strain E2348/69 / EPEC).